A 115-amino-acid chain; its full sequence is Large ribosomal subunit protein uL24 (115 aa).

2 disordered regions span residues V45–K77 and K96–S115.

It belongs to the universal ribosomal protein uL24 family. In terms of assembly, part of the 50S ribosomal subunit.

In terms of biological role, one of two assembly initiator proteins, it binds directly to the 5'-end of the 23S rRNA, where it nucleates assembly of the 50S subunit. One of the proteins that surrounds the polypeptide exit tunnel on the outside of the subunit. The chain is Large ribosomal subunit protein uL24 from Rhodopirellula baltica (strain DSM 10527 / NCIMB 13988 / SH1).